A 355-amino-acid polypeptide reads, in one-letter code: Peptide chain release factor 1 (355 aa).

N5-methylglutamine is present on Gln-231.

The protein belongs to the prokaryotic/mitochondrial release factor family. Methylated by PrmC. Methylation increases the termination efficiency of RF1.

Its subcellular location is the cytoplasm. Functionally, peptide chain release factor 1 directs the termination of translation in response to the peptide chain termination codons UAG and UAA. In Wolinella succinogenes (strain ATCC 29543 / DSM 1740 / CCUG 13145 / JCM 31913 / LMG 7466 / NCTC 11488 / FDC 602W) (Vibrio succinogenes), this protein is Peptide chain release factor 1.